The following is a 1111-amino-acid chain: Kinesin-like protein KIP1 (1111 aa).

A compositionally biased stretch (polar residues) spans 1-11 (MARSSLPNRRT). The interval 1–34 (MARSSLPNRRTAQFEANKRRTIAHAPSPSLSNGM) is disordered. Residues 52–410 (NIHVYVRCRS…LEYATRAKSI (359 aa)) enclose the Kinesin motor domain. 141-148 (GQTGTGKT) contacts ATP. Coiled-coil stretches lie at residues 424–510 (TCLK…IIQN), 648–670 (KDLN…DIKS), 710–780 (KLIK…DQDI), and 808–828 (HNAE…TNDL). Over residues 1007–1016 (AENKSKDDTS) the composition is skewed to basic and acidic residues. A disordered region spans residues 1007-1111 (AENKSKDDTS…DILQNKKLHQ (105 aa)). Polar residues-rich tracts occupy residues 1017 to 1038 (NSRT…QFSP) and 1057 to 1082 (SINS…SQNN).

This sequence belongs to the TRAFAC class myosin-kinesin ATPase superfamily. Kinesin family. BimC subfamily. As to quaternary structure, might be dimeric.

The protein localises to the cytoplasm. Its subcellular location is the cytoskeleton. It localises to the spindle. Required for assembly of the mitotic spindle. Interacts with spindle microtubules to produce an outwardly directed force acting upon the poles. Following spindle assembly, CIN8 and KIP1 apparently act to oppose a force that draws separated poles back together. This force seems to be mediate by KAR3. The sequence is that of Kinesin-like protein KIP1 (KIP1) from Saccharomyces cerevisiae (strain ATCC 204508 / S288c) (Baker's yeast).